The primary structure comprises 255 residues: 3-dehydroquinate dehydratase (255 aa).

3-dehydroquinate-binding positions include 47–49 (EWR) and Arg83. His144 serves as the catalytic Proton donor/acceptor. Lys171 serves as the catalytic Schiff-base intermediate with substrate. 3 residues coordinate 3-dehydroquinate: Arg214, Ser233, and Gln237.

This sequence belongs to the type-I 3-dehydroquinase family. As to quaternary structure, homodimer.

The enzyme catalyses 3-dehydroquinate = 3-dehydroshikimate + H2O. The protein operates within metabolic intermediate biosynthesis; chorismate biosynthesis; chorismate from D-erythrose 4-phosphate and phosphoenolpyruvate: step 3/7. Involved in the third step of the chorismate pathway, which leads to the biosynthesis of aromatic amino acids. Catalyzes the cis-dehydration of 3-dehydroquinate (DHQ) and introduces the first double bond of the aromatic ring to yield 3-dehydroshikimate. In Alkaliphilus oremlandii (strain OhILAs) (Clostridium oremlandii (strain OhILAs)), this protein is 3-dehydroquinate dehydratase.